The sequence spans 860 residues: Tetratricopeptide repeat protein 13 (860 aa).

7 TPR repeats span residues 143–176 (TNEE…EPDL), 216–248 (PEVF…LQPS), 249–282 (ARLY…NKNQ), 284–316 (IAML…KVDF), 317–350 (IDAY…NQNH), 352–384 (QTLQ…EPYN), and 386–418 (VCQY…DPLP).

In Homo sapiens (Human), this protein is Tetratricopeptide repeat protein 13 (TTC13).